The primary structure comprises 230 residues: Ribonuclease 3 (230 aa).

The region spanning 10–133 (DPRLLSRIGY…IIGAIYLDSS (124 aa)) is the RNase III domain. A Mg(2+)-binding site is contributed by E46. Residue D50 is part of the active site. D119 and E122 together coordinate Mg(2+). The active site involves E122. The region spanning 161–230 (DPKSRLQEYL…AAEILKLLEQ (70 aa)) is the DRBM domain.

It belongs to the ribonuclease III family. As to quaternary structure, homodimer. Mg(2+) is required as a cofactor.

It localises to the cytoplasm. The enzyme catalyses Endonucleolytic cleavage to 5'-phosphomonoester.. Its function is as follows. Digests double-stranded RNA. Involved in the processing of primary rRNA transcript to yield the immediate precursors to the large and small rRNAs (23S and 16S). Processes some mRNAs, and tRNAs when they are encoded in the rRNA operon. Processes pre-crRNA and tracrRNA of type II CRISPR loci if present in the organism. In Acinetobacter baumannii (strain SDF), this protein is Ribonuclease 3.